The primary structure comprises 123 residues: Thioredoxin H-type (123 aa).

Positions 2 to 119 (AATAELIPAG…IEAKLLKHSQ (118 aa)) constitute a Thioredoxin domain. A disulfide bridge connects residues Cys45 and Cys48.

The protein belongs to the thioredoxin family. Plant H-type subfamily.

Its subcellular location is the cytoplasm. Participates in various redox reactions through the reversible oxidation of the active center dithiol to a disulfide. The H form is known to activate a number of cytosolic enzymes. In Brassica campestris (Field mustard), this protein is Thioredoxin H-type (PEC-2).